The sequence spans 877 residues: Alpha-glucosidase (877 aa).

Residues 1-23 (MATVGVLLLCLCLCLFAPRLCSS) form the signal peptide. The tract at residues 89–115 (VPQDIIPRPAPGDVLHDAPPASSAPLQ) is disordered. Residues N191, N298, N338, and N391 are each glycosylated (N-linked (GlcNAc...) asparagine). Residues D437 and E440 contribute to the active site. Residue N471 is glycosylated (N-linked (GlcNAc...) asparagine). D534 (proton donor) is an active-site residue. An N-linked (GlcNAc...) asparagine glycan is attached at N570.

This sequence belongs to the glycosyl hydrolase 31 family. As to expression, high levels seen in the aleurone and scutellum after germination, while low levels are found in developing seeds.

The catalysed reaction is Hydrolysis of terminal, non-reducing (1-&gt;4)-linked alpha-D-glucose residues with release of alpha-D-glucose.. The sequence is that of Alpha-glucosidase from Hordeum vulgare (Barley).